The primary structure comprises 1495 residues: MAAIYSGIQLKLKNTRTPWPDKLKLARFAWISTQCLLPNKEQVLFDWTNHALTCFYNKKVEMPPEVVEGLWTYLDDILHSRKLHNVLSQGKTISLRLTVAQIINDRILDYTSGLRSVSFHTILSCCHGILTSPVLSVIYTAKYELLVQLLSRLCGLTSMQLRQQKYEEPLSLKAFEVLLVVLSNYLTVQKQQANSNRVFFQVTAHLLHPLLLLRHLLNTRVWTEKDDVKIRQNLSKEIRTKVDAVLQSALFLSDHLQSYKVEVSPSENEAGDRKSHIGKGLQGPLNTILTRICIHGASEEEEALFYAVKSNSLSLLFKFALDSFCRGGENKRVIFHLMAKLITALGFTDELDIDENFRASNWGICLLALENLLNSCLVGDIYNVAADRIQHGEVQFNFYRKVARLLFNNTQMGVPAWYRCLRALLALNHQILEPDLDELLSAVWVDAENMELRVRKAREALVSAVLQTYSKLRQLPKLIEELLDVVCRPAADELRPALLPEAIQKTLSQCLLDNPLRQNLEICGLILKRVQSCLLPHIQDETSDLALKVFSMSLLLHAVLFSFKTLDNSTPVPVVKQTLSLMTEMLKVVEDLLEQKLATKGPWMEKVQEVTLLLAHTWVEADALFQIHCTKYTSPSASQSSTLVDKALMLRNMDSPLGKLLQNLLALHKLKIHLLKSFSESSEMQKMAQFILNREELSVIHSLDQMWDFQFCNVNSSTYNAAHWFLVTSNLPLIAPYLDPNDRSVFAECMLKSLLQSLDASGSNLENTGISVCLISRQLLESPVLCELPEIFSALTKCIIKALFGLLDSSHMQLICPSFLTPPVENVEVKDEEMGMTPSMKRLKAIGLEMLYSVKMKSSVPLSKRQINGLLQLVKVTSVLNGYAMSYEDYLELFLTLLTLTSTIQCVEETNLSAFIELLKELFSVMASLLLAKNSQSILKVIHGSNLLEATMTTLFSRSSEGLFKSLDGPTWLSFLQSVQDFIQSLIRLIIDRKSSICLNLEKFTSFMVECNFTARVLTVDTGDLFSLQLHLVTLSALCREMMTTLGKNKQLDQALTHLLEKATAVMEPAIQAVLMGKGSCLLRQSFSVEVVTVMIRCELARASSSNDDGQEKISSMPFYRSFYQQILKELFPSPRPMDFLISSIHYLSAFHMAAEKTKVADLEDLHIEILQSIQALLSGTWMSLTDVKELEGPVKELLNQLMSNCSQEQFHLFLLMLREGLVAAKVEGGQCSEVLSAVTLIKLLACCLFPEHCSKAFWLITPQIISSLIFIIKESSKLPSLTRVLTVPGLEALTVLLRQGKAQISNPHQVIVVLGALQFVPLDSHCMEDYHSAFEAVHEALFAIIHCYPQVMLKASPTFLNCFYRLVSSVMHEGKQRSDTDRASEKDRESLLKCARLVERMYTHVASAAEDFTVLSSFMVAQYVSELQRVTLQPEIKAHLTEGIYCILDHCVEQDIKFLNTTLQMGVKEVFNELYSSYTHYHKSQRQGEEKYTV.

It localises to the nucleus. It is found in the nucleolus. Essential for hematopietic stem cell development through the regulation of p53/TP53 pathway. The polypeptide is Unhealthy ribosome biogenesis protein 2 homolog (urb2) (Danio rerio (Zebrafish)).